The following is an 83-amino-acid chain: High-potential iron-sulfur protein (83 aa).

Residues Cys-43, Cys-46, Cys-61, and Cys-75 each coordinate [4Fe-4S] cluster.

It belongs to the high-potential iron-sulfur protein (HiPIP) family. Homodimer.

The protein resides in the periplasm. Its function is as follows. Specific class of high-redox-potential 4Fe-4S ferredoxins. Functions in anaerobic electron transport in most purple and in some other photosynthetic bacteria and in at least one genus (Paracoccus) of halophilic, denitrifying bacteria. The protein is High-potential iron-sulfur protein of Thiocystis violacea.